We begin with the raw amino-acid sequence, 337 residues long: Protein-methionine-sulfoxide reductase catalytic subunit MsrP (337 aa).

A signal peptide (tat-type signal) is located at residues 1–48 (MLIKIPSRSDCSESEVTSETLYLSRRRLLGASFAGLALASGLPRLGFA). Residues Asn-94, 97–98 (YE), Cys-152, Thr-187, Asn-237, Arg-242, and 253–255 (SIK) contribute to the Mo-molybdopterin site.

Belongs to the MsrP family. Heterodimer of a catalytic subunit (MsrP) and a heme-binding subunit (MsrQ). It depends on Mo-molybdopterin as a cofactor. Predicted to be exported by the Tat system. The position of the signal peptide cleavage has not been experimentally proven.

Its subcellular location is the periplasm. The enzyme catalyses L-methionyl-[protein] + a quinone + H2O = L-methionyl-(S)-S-oxide-[protein] + a quinol. It carries out the reaction L-methionyl-[protein] + a quinone + H2O = L-methionyl-(R)-S-oxide-[protein] + a quinol. Its function is as follows. Part of the MsrPQ system that repairs oxidized periplasmic proteins containing methionine sulfoxide residues (Met-O), using respiratory chain electrons. Thus protects these proteins from oxidative-stress damage caused by reactive species of oxygen and chlorine generated by the host defense mechanisms. MsrPQ is essential for the maintenance of envelope integrity under bleach stress, rescuing a wide series of structurally unrelated periplasmic proteins from methionine oxidation. The catalytic subunit MsrP is non-stereospecific, being able to reduce both (R-) and (S-) diastereoisomers of methionine sulfoxide. This is Protein-methionine-sulfoxide reductase catalytic subunit MsrP from Pseudomonas aeruginosa (strain ATCC 15692 / DSM 22644 / CIP 104116 / JCM 14847 / LMG 12228 / 1C / PRS 101 / PAO1).